The following is a 222-amino-acid chain: Ribonuclease 3 (222 aa).

The RNase III domain maps to 3–125 (SQSVAKKLNH…LFGAIYLDAG (123 aa)). Glutamate 38 contacts Mg(2+). Residue aspartate 42 is part of the active site. The Mg(2+) site is built by aspartate 111 and glutamate 114. The active site involves glutamate 114. Residues 152–222 (DAKTRLQEWL…AEKALKELLA (71 aa)) form the DRBM domain.

It belongs to the ribonuclease III family. Homodimer. It depends on Mg(2+) as a cofactor.

It localises to the cytoplasm. The enzyme catalyses Endonucleolytic cleavage to 5'-phosphomonoester.. Digests double-stranded RNA. Involved in the processing of primary rRNA transcript to yield the immediate precursors to the large and small rRNAs (23S and 16S). Processes some mRNAs, and tRNAs when they are encoded in the rRNA operon. Processes pre-crRNA and tracrRNA of type II CRISPR loci if present in the organism. The protein is Ribonuclease 3 of Dechloromonas aromatica (strain RCB).